We begin with the raw amino-acid sequence, 321 residues long: MSTDYLTLNRTGDKMPIRGFGCWKIDTKDCEETVYQAIKTGYRLFDGACDYGNEVEVGRGINKAINEGLVKREDLFIVTKLWNTFHSKKHVRALFDRQLKDTGLEYFDLYLIHFPVPLQYVDPATVYPPGWYVGDAKSLQFEQSPIHECWAELEKIVDAGLARNIGVANFNCQAILDLLTYARIKPAVLQIELHPYLPQERLVKWVKEQGIQITAYSSFGPTSYVDLTESGKTYTSLLEHASVKSVADKHNVSTGQVLLRWALDREFAVIPKSVNAGRMKANLEILDIKLDAEDNKTLDSLKTNQRFNDPMTYGFGLPLFD.

The Proton donor role is filled by Tyr51. His113 provides a ligand contact to substrate.

This sequence belongs to the aldo/keto reductase family.

It functions in the pathway pheromone biosynthesis; trisporate biosynthesis. Functionally, catalyzes the NADP-dependent oxidation of (+) mating-type specific precursor 4-dihydromethyl-trisporate to methyl-trisporate. In Mucor mucedo (Common pinmould), this protein is 4-dihydromethyl-trisporate dehydrogenase (tdh).